Consider the following 392-residue polypeptide: Succinate--CoA ligase [ADP-forming] subunit beta (392 aa).

The ATP-grasp domain occupies 9-248 (KEILRGFGVT…TSEEDPLEVE (240 aa)). ATP-binding positions include lysine 50, 57–59 (GRG), glutamate 103, methionine 106, and glutamate 111. Mg(2+)-binding residues include asparagine 203 and aspartate 217. Substrate is bound by residues asparagine 268 and 325-327 (GIV).

It belongs to the succinate/malate CoA ligase beta subunit family. In terms of assembly, heterotetramer of two alpha and two beta subunits. Mg(2+) serves as cofactor.

It carries out the reaction succinate + ATP + CoA = succinyl-CoA + ADP + phosphate. The catalysed reaction is GTP + succinate + CoA = succinyl-CoA + GDP + phosphate. The protein operates within carbohydrate metabolism; tricarboxylic acid cycle; succinate from succinyl-CoA (ligase route): step 1/1. Succinyl-CoA synthetase functions in the citric acid cycle (TCA), coupling the hydrolysis of succinyl-CoA to the synthesis of either ATP or GTP and thus represents the only step of substrate-level phosphorylation in the TCA. The beta subunit provides nucleotide specificity of the enzyme and binds the substrate succinate, while the binding sites for coenzyme A and phosphate are found in the alpha subunit. This chain is Succinate--CoA ligase [ADP-forming] subunit beta, found in Chloroherpeton thalassium (strain ATCC 35110 / GB-78).